We begin with the raw amino-acid sequence, 1702 residues long: Dicer-like protein 4 (1702 aa).

Disordered stretches follow at residues 1–52 (MRDE…SAAT) and 89–120 (SSSS…EKDP). The span at 17-31 (GKRDREQKNCEEEKN) shows a compositional bias: basic and acidic residues. Over residues 89 to 105 (SSSSVSSFSSSSSSLFS) the composition is skewed to low complexity. The Helicase ATP-binding domain maps to 131-307 (LCKKATEENV…SENLSKSINS (177 aa)). Position 144-151 (144-151 (LGTGCGKT)) interacts with ATP. The DECH box signature appears at 251 to 254 (DECH). The Helicase C-terminal domain maps to 475 to 629 (QLIKILSVFR…RMNLEITYRS (155 aa)). In terms of domain architecture, Dicer dsRNA-binding fold spans 656-748 (SISLLYKYCS…LPDSKDEIED (93 aa)). One can recognise a PAZ domain in the interval 932-1054 (LVEDIFPPSG…IPPELSHLKI (123 aa)). RNase III domains lie at 1083-1251 (ELKH…VDSG) and 1292-1436 (LETL…LDCG). Residues Glu-1330, Asp-1422, and Glu-1425 each coordinate Mg(2+). 2 consecutive DRBM domains span residues 1462 to 1528 (SPIK…NLKA) and 1621 to 1697 (TAKS…CLKH).

Belongs to the helicase family. Dicer subfamily. In terms of assembly, interacts with DRB4. Requires Mg(2+) as cofactor. Mn(2+) is required as a cofactor.

It localises to the nucleus. Functionally, ribonuclease (RNase) III involved in RNA-mediated post-transcriptional gene silencing (PTGS). Functions in the biogenesis of trans-acting small interfering RNAs (ta-siRNAs, derived from the TAS1, TAS2 or TAS3 endogenous transcripts) by cleaving small dsRNAs into 21-24 nucleotide ta-siRNAs. Functions with the dsRNA-binding protein DRB4 in ta-siRNAs processing. Acts in the RDR6/SGS3/DCL4/AGO7 ta-siRNA pathway involved in leaf developmental timing. Plays a role in transitive silencing of transgenes by processing secondary siRNAs. This pathway, which requires DCL2 and RDR6, amplifies silencing by using the target RNA as substrate to generate secondary siRNAs, providing an efficient mechanism for long-distance silencing. Required for the production of the 30-40 nucleotide bacterial-induced long siRNAs (lsiRNA). May participate with DCL3 in the production of 24 nucleotide repeat-associated siRNAs (ra-siRNAs) which derive from heterochromatin and DNA repeats such as transposons. Plays an important role in antiviral RNA silencing. Involved in the production of viral siRNAs derived from the cucumber mosaic virus (CMV), turnip crinkle virus (TCV) and tobacco rattle virus (TRV). Targeted by the viral silencing suppressor (VSR) protein 2b of the cucumber mosaic virus (CMV) that inactivates DCL4 function in RNA silencing. Does not seem to be involved in microRNAs (miRNAs) processing. The chain is Dicer-like protein 4 (DCL4) from Arabidopsis thaliana (Mouse-ear cress).